The sequence spans 110 residues: Flagellar hook-basal body complex protein FliE (110 aa).

The protein belongs to the FliE family.

The protein resides in the bacterial flagellum basal body. In Pseudomonas entomophila (strain L48), this protein is Flagellar hook-basal body complex protein FliE.